Consider the following 342-residue polypeptide: Phenylalanine--tRNA ligase alpha subunit (342 aa).

Glutamate 260 contributes to the Mg(2+) binding site.

It belongs to the class-II aminoacyl-tRNA synthetase family. Phe-tRNA synthetase alpha subunit type 1 subfamily. Tetramer of two alpha and two beta subunits. The cofactor is Mg(2+).

Its subcellular location is the cytoplasm. The catalysed reaction is tRNA(Phe) + L-phenylalanine + ATP = L-phenylalanyl-tRNA(Phe) + AMP + diphosphate + H(+). In Nocardia farcinica (strain IFM 10152), this protein is Phenylalanine--tRNA ligase alpha subunit.